A 230-amino-acid polypeptide reads, in one-letter code: Phosphoenolpyruvate guanylyltransferase (230 aa).

Phosphoenolpyruvate is bound by residues threonine 139, glycine 155, and serine 158.

This sequence belongs to the CofC family.

The enzyme catalyses phosphoenolpyruvate + GTP + H(+) = enolpyruvoyl-2-diphospho-5'-guanosine + diphosphate. The protein operates within cofactor biosynthesis; coenzyme F420 biosynthesis. Guanylyltransferase that catalyzes the activation of phosphoenolpyruvate (PEP) as enolpyruvoyl-2-diphospho-5'-guanosine, via the condensation of PEP with GTP. It is involved in the biosynthesis of coenzyme F420, a hydride carrier cofactor. This is Phosphoenolpyruvate guanylyltransferase from Thermobaculum terrenum (strain ATCC BAA-798 / CCMEE 7001 / YNP1).